Here is a 156-residue protein sequence, read N- to C-terminus: ATP synthase subunit b (156 aa).

The helical transmembrane segment at Leu-7–Pro-27 threads the bilayer.

Belongs to the ATPase B chain family. F-type ATPases have 2 components, F(1) - the catalytic core - and F(0) - the membrane proton channel. F(1) has five subunits: alpha(3), beta(3), gamma(1), delta(1), epsilon(1). F(0) has three main subunits: a(1), b(2) and c(10-14). The alpha and beta chains form an alternating ring which encloses part of the gamma chain. F(1) is attached to F(0) by a central stalk formed by the gamma and epsilon chains, while a peripheral stalk is formed by the delta and b chains.

The protein localises to the cell inner membrane. In terms of biological role, f(1)F(0) ATP synthase produces ATP from ADP in the presence of a proton or sodium gradient. F-type ATPases consist of two structural domains, F(1) containing the extramembraneous catalytic core and F(0) containing the membrane proton channel, linked together by a central stalk and a peripheral stalk. During catalysis, ATP synthesis in the catalytic domain of F(1) is coupled via a rotary mechanism of the central stalk subunits to proton translocation. Functionally, component of the F(0) channel, it forms part of the peripheral stalk, linking F(1) to F(0). This is ATP synthase subunit b from Paraburkholderia phymatum (strain DSM 17167 / CIP 108236 / LMG 21445 / STM815) (Burkholderia phymatum).